We begin with the raw amino-acid sequence, 102 residues long: UPF0122 protein MPN_424 (102 aa).

This sequence belongs to the UPF0122 family.

Its function is as follows. Might take part in the signal recognition particle (SRP) pathway. This is inferred from the conservation of its genetic proximity to ftsY/ffh. May be a regulatory protein. The sequence is that of UPF0122 protein MPN_424 from Mycoplasma pneumoniae (strain ATCC 29342 / M129 / Subtype 1) (Mycoplasmoides pneumoniae).